Reading from the N-terminus, the 958-residue chain is Dermatan-sulfate epimerase (958 aa).

Positions 1–22 (MRTHTRGAPSVFFIYLLCFVSA) are cleaved as a signal peptide. Residues 23–902 (YITDENPEVM…APSLSASYTR (880 aa)) lie on the Lumenal side of the membrane. The N-linked (GlcNAc...) (complex) asparagine glycan is linked to asparagine 183. The Proton donor role is filled by histidine 205. The active site involves tyrosine 261. A glycan (N-linked (GlcNAc...) (high mannose) asparagine) is linked at asparagine 336. Residue asparagine 411 is glycosylated (N-linked (GlcNAc...) (complex) asparagine). Histidine 452 and glutamate 470 together coordinate Mn(2+). Residue tyrosine 473 is part of the active site. Asparagine 481 is a Mn(2+) binding site. Asparagine 642 carries N-linked (GlcNAc...) (complex) asparagine glycosylation. N-linked (GlcNAc...) (paucimannose) asparagine glycosylation is present at asparagine 648. Residues 903 to 923 (LFLILNIAIFFVMLAMQLTYF) traverse the membrane as a helical segment. Over 924-933 (QRAQSLHGQR) the chain is Cytoplasmic. A helical membrane pass occupies residues 934–954 (CLYAVLLIDSCILLWLYSSCS). At 955–958 (QSQC) the chain is on the lumenal side.

It belongs to the dermatan-sulfate isomerase family. Mn(2+) is required as a cofactor. In terms of processing, N-glycosylated. Glycosylation is important for enzymatic activity. In terms of tissue distribution, ubiquitously expressed with higher expression in kidney and ovary and lower expression in brain, colon and thymus. Also expressed in renal cell carcinomas, brain tumors, and in a part of melanomas and adenocarcinomas from organs other than the breast. Expressed in squamous cell carcinomas (SCC), glioma, and some adenocarcinoma cell lines, but not in breast cancer cell lines or any normal tissues (at protein level).

Its subcellular location is the endoplasmic reticulum membrane. The protein resides in the golgi apparatus membrane. It is found in the cytoplasmic vesicle membrane. It localises to the microsome membrane. The enzyme catalyses chondroitin 4'-sulfate = dermatan 4'-sulfate. The protein operates within glycan metabolism; chondroitin sulfate biosynthesis. It functions in the pathway glycan metabolism; heparan sulfate biosynthesis. Converts D-glucuronic acid to L-iduronic acid (IdoUA) residues. Plays an important role in the biosynthesis of the glycosaminoglycan/mucopolysaccharide dermatan sulfate. The protein is Dermatan-sulfate epimerase (DSE) of Homo sapiens (Human).